The sequence spans 65 residues: Large ribosomal subunit protein bL35 (65 aa).

Belongs to the bacterial ribosomal protein bL35 family.

The chain is Large ribosomal subunit protein bL35 from Aeromonas hydrophila subsp. hydrophila (strain ATCC 7966 / DSM 30187 / BCRC 13018 / CCUG 14551 / JCM 1027 / KCTC 2358 / NCIMB 9240 / NCTC 8049).